A 427-amino-acid polypeptide reads, in one-letter code: 3-phosphoshikimate 1-carboxyvinyltransferase (427 aa).

Residues Lys22, Ser23, and Arg27 each contribute to the 3-phosphoshikimate site. Phosphoenolpyruvate is bound at residue Lys22. The phosphoenolpyruvate site is built by Gly96 and Arg124. Residues Ser169, Ser170, Gln171, Ser197, Asp313, Asn336, and Lys340 each contribute to the 3-phosphoshikimate site. Residue Gln171 participates in phosphoenolpyruvate binding. The active-site Proton acceptor is the Asp313. 3 residues coordinate phosphoenolpyruvate: Arg344, Arg386, and Lys411.

This sequence belongs to the EPSP synthase family. As to quaternary structure, monomer.

It localises to the cytoplasm. It catalyses the reaction 3-phosphoshikimate + phosphoenolpyruvate = 5-O-(1-carboxyvinyl)-3-phosphoshikimate + phosphate. The protein operates within metabolic intermediate biosynthesis; chorismate biosynthesis; chorismate from D-erythrose 4-phosphate and phosphoenolpyruvate: step 6/7. Its function is as follows. Catalyzes the transfer of the enolpyruvyl moiety of phosphoenolpyruvate (PEP) to the 5-hydroxyl of shikimate-3-phosphate (S3P) to produce enolpyruvyl shikimate-3-phosphate and inorganic phosphate. The chain is 3-phosphoshikimate 1-carboxyvinyltransferase from Salmonella paratyphi A (strain ATCC 9150 / SARB42).